Here is a 37-residue protein sequence, read N- to C-terminus: Cytochrome b6-f complex subunit 5 (37 aa).

The chain crosses the membrane as a helical span at residues 5–25 (LLSGIVLGLVPITITGLLVTA).

It belongs to the PetG family. As to quaternary structure, the 4 large subunits of the cytochrome b6-f complex are cytochrome b6, subunit IV (17 kDa polypeptide, PetD), cytochrome f and the Rieske protein, while the 4 small subunits are PetG, PetL, PetM and PetN. The complex functions as a dimer.

The protein localises to the plastid. It localises to the chloroplast thylakoid membrane. In terms of biological role, component of the cytochrome b6-f complex, which mediates electron transfer between photosystem II (PSII) and photosystem I (PSI), cyclic electron flow around PSI, and state transitions. PetG is required for either the stability or assembly of the cytochrome b6-f complex. This is Cytochrome b6-f complex subunit 5 from Tupiella akineta (Green alga).